The sequence spans 85 residues: uncharacterized protein (85 aa).

Transmembrane regions (helical) follow at residues 20–42 (IYWFFCLYYKDGPILYTIYTTFL) and 52–69 (IILRNTVAFLSFMYKHYY).

The protein resides in the membrane. This is an uncharacterized protein from Saccharomyces cerevisiae (strain ATCC 204508 / S288c) (Baker's yeast).